The sequence spans 540 residues: Cytosolic carboxypeptidase 6 (540 aa).

The Peptidase M14 domain maps to 167–438; it reads YPYTYTRFQH…NVARTFLDYY (272 aa). 3 residues coordinate Zn(2+): His-230, Glu-233, and His-328. Glu-401 serves as the catalytic Proton donor/acceptor.

It belongs to the peptidase M14 family. Interacts with MYLK. Requires Zn(2+) as cofactor. As to expression, widely expressed. Expressed abundantly in testis, pituitary and brain and to a lower extent in eye, stomach, adrenal and kidney. In brain, expressed at low level in cerebellum as compared to cortex.

The protein localises to the cytoplasm. The protein resides in the cytosol. It is found in the cytoskeleton. Its subcellular location is the microtubule organizing center. It localises to the centrosome. The protein localises to the centriole. The protein resides in the golgi apparatus. It is found in the cilium basal body. The enzyme catalyses (L-glutamyl)(n+1)-gamma-L-glutamyl-L-glutamyl-[protein] + H2O = (L-glutamyl)(n)-gamma-L-glutamyl-L-glutamyl-[protein] + L-glutamate. It carries out the reaction C-terminal L-alpha-aminoacyl-L-glutamyl-L-glutamyl-[tubulin] + H2O = C-terminal L-alpha-aminoacyl-L-glutamyl-[tubulin] + L-glutamate. Its function is as follows. Metallocarboxypeptidase that mediates protein deglutamylation of tubulin and non-tubulin target proteins. Catalyzes the removal of polyglutamate side chains present on the gamma-carboxyl group of glutamate residues within the C-terminal tail of tubulin protein. Specifically cleaves tubulin long-side-chains, while it is not able to remove the branching point glutamate. Also catalyzes the removal of polyglutamate residues from the carboxy-terminus of non-tubulin proteins such as MYLK. Mediates the deglutamylation of nucleotidyltransferase CGAS, leading to CGAS antiviral defense response activation. Involved in KLF4 deglutamylation which promotes KLF4 proteasome-mediated degradation, thereby negatively regulating cell pluripotency maintenance and embryogenesis. The polypeptide is Cytosolic carboxypeptidase 6 (Mus musculus (Mouse)).